The chain runs to 279 residues: Protein ABIL4 (279 aa).

2 disordered regions span residues 192–211 (VHNN…PMRF) and 219–241 (LLKR…EPQR). A compositionally biased stretch (polar residues) spans 194–208 (NNINNRTPNKRSNSP). Residues 219–228 (LLKRSSSPSQ) show a composition bias toward low complexity.

This sequence belongs to the ABI family. As to quaternary structure, binds SCAR.

Its subcellular location is the cytoplasm. The protein localises to the cytoskeleton. Functionally, involved in regulation of actin and microtubule organization. Part of a WAVE complex that activates the Arp2/3 complex. The polypeptide is Protein ABIL4 (ABIL4) (Arabidopsis thaliana (Mouse-ear cress)).